Reading from the N-terminus, the 215-residue chain is 3-demethoxyubiquinol 3-hydroxylase (215 aa).

6 residues coordinate Fe cation: glutamate 64, glutamate 94, histidine 97, glutamate 146, glutamate 178, and histidine 181.

Belongs to the COQ7 family. Requires Fe cation as cofactor.

It localises to the cell membrane. The enzyme catalyses a 5-methoxy-2-methyl-3-(all-trans-polyprenyl)benzene-1,4-diol + AH2 + O2 = a 3-demethylubiquinol + A + H2O. It functions in the pathway cofactor biosynthesis; ubiquinone biosynthesis. Functionally, catalyzes the hydroxylation of 2-nonaprenyl-3-methyl-6-methoxy-1,4-benzoquinol during ubiquinone biosynthesis. The polypeptide is 3-demethoxyubiquinol 3-hydroxylase (Pseudomonas putida (strain GB-1)).